The sequence spans 392 residues: Cytochrome b (392 aa).

Transmembrane regions (helical) follow at residues 38-58 (FGSL…FLAM), 82-104 (WLLR…LHIF), 119-139 (VRCL…TGYV), and 185-205 (FFSL…LHLA). Residues H88 and H102 each contribute to the heme b site. Heme b-binding residues include H189 and H203. H208 is a binding site for a ubiquinone. A run of 4 helical transmembrane segments spans residues 231-251 (FYVK…IWIF), 295-315 (SGGV…PFFK), 327-347 (IHQG…WIGC), and 354-373 (FVTI…AITP).

Belongs to the cytochrome b family. In terms of assembly, the main subunits of complex b-c1 are: cytochrome b, cytochrome c1 and the Rieske protein. It depends on heme b as a cofactor.

It localises to the mitochondrion inner membrane. In terms of biological role, component of the ubiquinol-cytochrome c reductase complex (complex III or cytochrome b-c1 complex) that is part of the mitochondrial respiratory chain. The b-c1 complex mediates electron transfer from ubiquinol to cytochrome c. Contributes to the generation of a proton gradient across the mitochondrial membrane that is then used for ATP synthesis. The sequence is that of Cytochrome b (MT-CYB) from Vicia faba (Broad bean).